A 257-amino-acid chain; its full sequence is Lysine-rich coiled-coil protein 1 (257 aa).

The tract at residues 145–257 (NTSAHQASYK…MLWDQSILGF (113 aa)) is disordered. Over residues 152–162 (SYKHIHQKRKR) the composition is skewed to basic residues. Basic and acidic residues-rich tracts occupy residues 163 to 176 (HTEEGREKPEEERP), 183 to 193 (ACEEIDLDKYK), 200 to 212 (TEAETVRVSTEKL), and 219 to 228 (RSRDVASKKE). Residues 210–248 (EKLKNRKEKRSRDVASKKEERKRRKEKKEQGQERTEEEM) are a coiled coil.

This is Lysine-rich coiled-coil protein 1 (KRCC1) from Bos taurus (Bovine).